Consider the following 57-residue polypeptide: Small ribosomal subunit protein bS21 (57 aa).

The interval 32–57 (VRKRKHFEKPSVKRKKKSEAARKRKF) is disordered. Residues 33 to 57 (RKRKHFEKPSVKRKKKSEAARKRKF) are compositionally biased toward basic residues.

Belongs to the bacterial ribosomal protein bS21 family.

In Shouchella clausii (strain KSM-K16) (Alkalihalobacillus clausii), this protein is Small ribosomal subunit protein bS21.